We begin with the raw amino-acid sequence, 171 residues long: 16S rRNA aminocarboxypropyltransferase (171 aa).

Positions 17, 67, 90, and 109 each coordinate S-adenosyl-L-methionine.

The protein belongs to the TDD superfamily. TSR3 family.

The protein localises to the cytoplasm. The catalysed reaction is an N(1)-methylpseudouridine in rRNA + S-adenosyl-L-methionine = N(1)-methyl-N(3)-[(3S)-3-amino-3-carboxypropyl]pseudouridine in rRNA + S-methyl-5'-thioadenosine + H(+). In terms of biological role, aminocarboxypropyltransferase that catalyzes the aminocarboxypropyl transfer on pseudouridine corresponding to position 914 in M.jannaschii 16S rRNA. It constitutes the last step in biosynthesis of the hypermodified N1-methyl-N3-(3-amino-3-carboxypropyl) pseudouridine (m1acp3-Psi). In Methanobrevibacter smithii (strain ATCC 35061 / DSM 861 / OCM 144 / PS), this protein is 16S rRNA aminocarboxypropyltransferase.